Consider the following 359-residue polypeptide: UDP-3-O-acylglucosamine N-acyltransferase (359 aa).

Catalysis depends on His253, which acts as the Proton acceptor.

It belongs to the transferase hexapeptide repeat family. LpxD subfamily. In terms of assembly, homotrimer.

It catalyses the reaction a UDP-3-O-[(3R)-3-hydroxyacyl]-alpha-D-glucosamine + a (3R)-hydroxyacyl-[ACP] = a UDP-2-N,3-O-bis[(3R)-3-hydroxyacyl]-alpha-D-glucosamine + holo-[ACP] + H(+). The protein operates within bacterial outer membrane biogenesis; LPS lipid A biosynthesis. Catalyzes the N-acylation of UDP-3-O-acylglucosamine using 3-hydroxyacyl-ACP as the acyl donor. Is involved in the biosynthesis of lipid A, a phosphorylated glycolipid that anchors the lipopolysaccharide to the outer membrane of the cell. The chain is UDP-3-O-acylglucosamine N-acyltransferase from Burkholderia lata (strain ATCC 17760 / DSM 23089 / LMG 22485 / NCIMB 9086 / R18194 / 383).